An 888-amino-acid polypeptide reads, in one-letter code: Prodigiosin synthesizing transferase PigC (888 aa).

The protein belongs to the PigC family.

It functions in the pathway antibiotic biosynthesis; prodigiosin biosynthesis. Functionally, involved in the biosynthesis of 2-methyl-3-n-amyl-pyrrole (MAP), one of the terminal products involved in the biosynthesis of the red antibiotic prodigiosin (Pig). Catalyzes the transfer of 2-methyl-3-n-amyl-pyrrole (MAP) to 4-methoxy-2,2'-bipyrrole-5-carbaldehyde (MBC) to yield prodigiosin. It is able to use substrates with a variety of monocyclic rings in place of the pyrrolic ring A of its natural substrate. The chain is Prodigiosin synthesizing transferase PigC from Serratia marcescens.